Consider the following 610-residue polypeptide: UvrABC system protein C (610 aa).

One can recognise a GIY-YIG domain in the interval 16 to 94 (NQPGVYRMYD…IKRYQPRYNV (79 aa)). Positions 204 to 239 (SQVIDALVARMEEASRALRFEEAARLRDQIQAVRRV) constitute a UVR domain.

Belongs to the UvrC family. As to quaternary structure, interacts with UvrB in an incision complex.

It is found in the cytoplasm. In terms of biological role, the UvrABC repair system catalyzes the recognition and processing of DNA lesions. UvrC both incises the 5' and 3' sides of the lesion. The N-terminal half is responsible for the 3' incision and the C-terminal half is responsible for the 5' incision. The polypeptide is UvrABC system protein C (Edwardsiella ictaluri (strain 93-146)).